A 623-amino-acid chain; its full sequence is Kelch repeat and BTB domain-containing protein 11 (623 aa).

The interval 1 to 129 (MEHAVAPCVL…PEEPGEPAPV (129 aa)) is disordered. The span at 12–31 (PGTEPGAAGESESEGAASPA) shows a compositional bias: low complexity. Residues 42–55 (CFSSGEESPPQSLA) are compositionally biased toward polar residues. Phosphoserine occurs at positions 64, 67, 87, and 107. A compositionally biased stretch (low complexity) spans 79–91 (EAGSAGAASPEEL). The 57-residue stretch at 140–196 (PDLVLEVSGRRLRAHKAVLAARSDYFRARASRDVLRVQGVSLTALRLLLADAYSGRM) folds into the BTB domain. Kelch repeat units follow at residues 311-359 (RPQS…VLYN), 360-412 (YLFV…ALDG), 413-455 (HLYA…ATTC), and 458-500 (EIYV…ALDG).

The chain is Kelch repeat and BTB domain-containing protein 11 (KBTBD11) from Homo sapiens (Human).